A 411-amino-acid polypeptide reads, in one-letter code: Glutamyl-tRNA reductase (411 aa).

Residues 48 to 51 (TCNR), Ser-106, 111 to 113 (EDQ), and Gln-117 each bind substrate. The active-site Nucleophile is Cys-49. 186 to 191 (GAGDMG) lines the NADP(+) pocket.

It belongs to the glutamyl-tRNA reductase family. Homodimer.

The catalysed reaction is (S)-4-amino-5-oxopentanoate + tRNA(Glu) + NADP(+) = L-glutamyl-tRNA(Glu) + NADPH + H(+). The protein operates within porphyrin-containing compound metabolism; protoporphyrin-IX biosynthesis; 5-aminolevulinate from L-glutamyl-tRNA(Glu): step 1/2. Catalyzes the NADPH-dependent reduction of glutamyl-tRNA(Glu) to glutamate 1-semialdehyde (GSA). In Clostridium novyi (strain NT), this protein is Glutamyl-tRNA reductase.